Here is a 1711-residue protein sequence, read N- to C-terminus: Nuclear pore complex protein Nup214 (1711 aa).

A run of 8 repeats spans residues 472–473, 486–487, 497–498, 511–512, 514–515, 535–536, 588–589, and 598–599. The 45 X 2 AA repeats of F-G stretch occupies residues 472-1703; sequence FGAAAAKAPA…NSNAQKPAFG (1232 aa). 2 leucine-zipper regions span residues 650–672 and 767–788; these read LDDL…VQGL and LTRL…KSKL. The interval 886–905 is disordered; the sequence is KPATANKYTQAAVAPPSPPD. Copy 9 of the repeat occupies 1009–1010; the sequence is FG. The interval 1012-1081 is disordered; the sequence is GSPAVAAPTP…NKSFGFGGFT (70 aa). 2 stretches are compositionally biased toward basic and acidic residues: residues 1037–1051 and 1058–1072; these read TKPK…KEFK and EESK…ETEN. Residues 1044–1711 are interaction with emb; the sequence is AAESKEFKAV…FGGSSFMNYR (668 aa). A run of 8 repeats spans residues 1075 to 1076, 1077 to 1078, 1097 to 1098, 1106 to 1107, 1135 to 1136, 1218 to 1219, 1229 to 1230, and 1240 to 1241. Residues 1251-1261 show a composition bias toward polar residues; it reads TSVTEANNKTD. The segment at 1251 to 1270 is disordered; the sequence is TSVTEANNKTDPISTTPSAI. A run of 27 repeats spans residues 1356 to 1357, 1388 to 1389, 1399 to 1400, 1434 to 1435, 1449 to 1450, 1458 to 1459, 1472 to 1473, 1481 to 1482, 1487 to 1488, 1507 to 1508, 1512 to 1513, 1539 to 1540, 1547 to 1548, 1562 to 1563, 1571 to 1572, 1584 to 1585, 1588 to 1589, 1601 to 1602, 1617 to 1618, 1623 to 1624, 1629 to 1630, 1635 to 1636, 1641 to 1642, 1647 to 1648, 1650 to 1651, 1662 to 1663, and 1686 to 1687. 2 disordered regions span residues 1533 to 1552 and 1557 to 1614; these read SPQA…SPAT and SGGS…TTTP. 2 stretches are compositionally biased toward gly residues: residues 1560–1572 and 1582–1595; these read SIFG…GGFG and GGFG…GGGS. Residues 1596–1614 show a composition bias toward low complexity; it reads VAQTGFGSPQAPQQQTTTP. Over residues 1688–1698 the composition is skewed to polar residues; the sequence is NLAQTGNSNAQ. Residues 1688 to 1711 form a disordered region; that stretch reads NLAQTGNSNAQKPAFGGSSFMNYR. Repeat 45 spans residues 1702-1703; that stretch reads FG.

As to quaternary structure, component of the nuclear pore complex. Interacts with mbo/Nup88 and (via C-terminus) with emb to attenuate emb-mediated protein export.

The protein localises to the nucleus. The protein resides in the nuclear pore complex. It localises to the nucleus membrane. Part of the nuclear pore complex. Serves as a docking site in the receptor-mediated import of substrates across the nuclear pore complex including emb, RanGAP and phosphorylated Mad. Protects mbo/Nup88 from proteasomal degradation at the nuclear pore. Together with mbo/Nup88, sequesters emb in the cytoplasm and thereby attenuates nuclear export signal (NES)-mediated nuclear export. Together with mbo/Nup88, required for the nuclear import of the Rel family transcription factors dorsal (dl) and Dorsal-related immunity factor (Dif) and the activation of an immune response. The sequence is that of Nuclear pore complex protein Nup214 from Drosophila melanogaster (Fruit fly).